The sequence spans 347 residues: DNA-directed RNA polymerase subunit alpha (347 aa).

The tract at residues 1-226 (MLISQRPTLS…ELFGLARELN (226 aa)) is alpha N-terminal domain (alpha-NTD). The segment at 241-347 (ADHIASFALP…DQDYAETEQL (107 aa)) is alpha C-terminal domain (alpha-CTD).

This sequence belongs to the RNA polymerase alpha chain family. In terms of assembly, homodimer. The RNAP catalytic core consists of 2 alpha, 1 beta, 1 beta' and 1 omega subunit. When a sigma factor is associated with the core the holoenzyme is formed, which can initiate transcription.

The enzyme catalyses RNA(n) + a ribonucleoside 5'-triphosphate = RNA(n+1) + diphosphate. DNA-dependent RNA polymerase catalyzes the transcription of DNA into RNA using the four ribonucleoside triphosphates as substrates. This is DNA-directed RNA polymerase subunit alpha from Mycobacterium avium (strain 104).